Reading from the N-terminus, the 663-residue chain is Cytoplasmic dynein 1 intermediate chain (663 aa).

Positions 17–37 (LREEKDRRRREKEIKDMEEAA) are enriched in basic and acidic residues. Disordered stretches follow at residues 17–52 (LREE…DQRK) and 75–107 (SVNS…KKQP). Low complexity predominate over residues 75–85 (SVNSMTSDNSN). Residues 86–99 (TQTPDASLQATVNG) are compositionally biased toward polar residues. 7 WD repeats span residues 311 to 360 (SKNR…STPE), 364 to 404 (HCQS…RTPI), 413 to 454 (AHTH…QPQD), 463 to 503 (SKAI…SGVN), 508 to 553 (RHLG…PLYS), 556 to 596 (DNSD…EVPT), and 602 to 641 (AGAP…AQPS).

Belongs to the dynein intermediate chain family. In terms of assembly, homodimer. The cytoplasmic dynein 1 complex consists of two catalytic heavy chains (HCs) and a number of non-catalytic subunits presented by intermediate chains (ICs), light intermediate chains (LICs) and light chains (LCs). As to expression, high levels of isoform 1b, isoform 1c, isoform 3a and isoform 4 accumulate in early egg chambers and at stage 9 become concentrated at the posterior of the oocyte. Isoform 5a and isoform 5b are highly expressed in adult head and to a lesser extent in adult torso. Isoform 1a, isoform 2a and isoform 2b are found in all tissues examined, including ovaries, midgut, torso and head.

It localises to the cytoplasm. Its subcellular location is the cytoskeleton. The protein localises to the lysosome membrane. It is found in the nucleus membrane. Functionally, acts as one of several non-catalytic accessory components of the cytoplasmic dynein 1 complex that are thought to be involved in linking dynein to cargos and to adapter proteins that regulate dynein function. Cytoplasmic dynein 1 acts as a motor for the intracellular retrograde motility of vesicles and organelles along microtubules. The intermediate chains mediate the help dynein bind to dynactin 150 kDa component. This Drosophila melanogaster (Fruit fly) protein is Cytoplasmic dynein 1 intermediate chain (sw).